Here is a 176-residue protein sequence, read N- to C-terminus: Pituitary adenylate cyclase-activating polypeptide (176 aa).

Positions 1–24 are cleaved as a signal peptide; the sequence is MTMCSGARLALLVYGIIMHSSVYS. Positions 25–79 are excised as a propeptide; that stretch reads SPAAAGLRFPGIRPEEEAYGEDGNPLPDFDGSEPPGAGSPASAPRAAAAWYRPAG. Residues 39 to 68 form a disordered region; sequence EEEAYGEDGNPLPDFDGSEPPGAGSPASAP. Residues 56-68 show a composition bias toward low complexity; the sequence is SEPPGAGSPASAP. An important for receptor binding region spans residues 150–158; the sequence is VKKYLAAVL. Leucine amide is present on Leu158. Lys169 carries the lysine amide modification. Positions 173 to 176 are excised as a propeptide; sequence IAYL.

The protein belongs to the glucagon family.

It is found in the secreted. Functionally, PACAP is a neuropeptide involved in diverse array of physiological processes through activating the PACAP subfamily of class B1 G protein-coupled receptors: VIP receptor 1 (VIPR1), VIP receptor 2 (VIPR2), and PACAP type I receptor (ADCYAP1R1). Exerts neuroprotective and general cytoprotective effects due to anti-apoptotic, anti-inflammatory, and antioxidant actions. Promotes neuron projection development through the RAPGEF2/Rap1/B-Raf/ERK pathway. In chromaffin cells, induces long-lasting increase of intracellular calcium concentrations and neuroendocrine secretion. Involved in the control of glucose homeostasis, induces insulin secretion by pancreatic beta cells. PACAP exists in two bioactive forms from proteolysis of the same precursor protein, PACAP27 and PACAP38, which differ by eleven amino acid residues in the C-terminus. The chain is Pituitary adenylate cyclase-activating polypeptide from Homo sapiens (Human).